The sequence spans 532 residues: Copalyl diphosphate synthase (532 aa).

The DXDDTA motif signature appears at 313–318 (DTDDTA). The QXXDGSW motif signature appears at 443–449 (QSDDGSW).

The protein belongs to the terpene synthase family. Mg(2+) is required as a cofactor.

The catalysed reaction is (2E,6E,10E)-geranylgeranyl diphosphate = (+)-copalyl diphosphate. In terms of biological role, involved in the biosynthesis of the mercapturic acid derivative diterpene cyslabdan A, a potentiator of the beta-lactam antibiotic imipenem. Catalyzes the conversion of geranylgeranyl diphosphate (GGDP) into (+)-copalyl diphosphate. This is Copalyl diphosphate synthase from Streptomyces cyslabdanicus.